The sequence spans 376 residues: UPF0754 membrane protein BH1148 (376 aa).

2 helical membrane passes run 3 to 23 (LILF…SLAI) and 355 to 375 (YLGA…ILLI).

Belongs to the UPF0754 family.

Its subcellular location is the cell membrane. This chain is UPF0754 membrane protein BH1148, found in Halalkalibacterium halodurans (strain ATCC BAA-125 / DSM 18197 / FERM 7344 / JCM 9153 / C-125) (Bacillus halodurans).